A 132-amino-acid chain; its full sequence is Small ribosomal subunit protein uS8 (132 aa).

It belongs to the universal ribosomal protein uS8 family. As to quaternary structure, part of the 30S ribosomal subunit. Contacts proteins S5 and S12.

Functionally, one of the primary rRNA binding proteins, it binds directly to 16S rRNA central domain where it helps coordinate assembly of the platform of the 30S subunit. The protein is Small ribosomal subunit protein uS8 of Syntrophobacter fumaroxidans (strain DSM 10017 / MPOB).